Consider the following 473-residue polypeptide: 3-isopropylmalate dehydratase large subunit (473 aa).

Positions 353, 414, and 417 each coordinate [4Fe-4S] cluster.

Belongs to the aconitase/IPM isomerase family. LeuC type 1 subfamily. As to quaternary structure, heterodimer of LeuC and LeuD. [4Fe-4S] cluster serves as cofactor.

The enzyme catalyses (2R,3S)-3-isopropylmalate = (2S)-2-isopropylmalate. The protein operates within amino-acid biosynthesis; L-leucine biosynthesis; L-leucine from 3-methyl-2-oxobutanoate: step 2/4. In terms of biological role, catalyzes the isomerization between 2-isopropylmalate and 3-isopropylmalate, via the formation of 2-isopropylmaleate. In Cellvibrio japonicus (strain Ueda107) (Pseudomonas fluorescens subsp. cellulosa), this protein is 3-isopropylmalate dehydratase large subunit.